A 43-amino-acid chain; its full sequence is Holotricin-1 (43 aa).

Intrachain disulfides connect C3/C34, C20/C39, and C24/C41.

It belongs to the invertebrate defensin family. Type 1 subfamily. In terms of tissue distribution, hemolymph.

It is found in the secreted. In terms of biological role, shows potent antibacterial activity against Gram-positive bacteria. This chain is Holotricin-1, found in Holotrichia diomphalia (Korean black chafer).